We begin with the raw amino-acid sequence, 89 residues long: Small ribosomal subunit protein uS15 (89 aa).

It belongs to the universal ribosomal protein uS15 family. In terms of assembly, part of the 30S ribosomal subunit. Forms a bridge to the 50S subunit in the 70S ribosome, contacting the 23S rRNA.

Functionally, one of the primary rRNA binding proteins, it binds directly to 16S rRNA where it helps nucleate assembly of the platform of the 30S subunit by binding and bridging several RNA helices of the 16S rRNA. In terms of biological role, forms an intersubunit bridge (bridge B4) with the 23S rRNA of the 50S subunit in the ribosome. In Pseudomonas putida (Arthrobacter siderocapsulatus), this protein is Small ribosomal subunit protein uS15.